The sequence spans 576 residues: Arginine--tRNA ligase (576 aa).

The 'HIGH' region motif lies at alanine 126–histidine 136.

The protein belongs to the class-I aminoacyl-tRNA synthetase family. In terms of assembly, monomer.

It is found in the cytoplasm. It catalyses the reaction tRNA(Arg) + L-arginine + ATP = L-arginyl-tRNA(Arg) + AMP + diphosphate. The sequence is that of Arginine--tRNA ligase from Rickettsia bellii (strain OSU 85-389).